The sequence spans 330 residues: tRNA-modifying protein YgfZ (330 aa).

Residues tryptophan 28 and tryptophan 190 each coordinate folate.

The protein belongs to the tRNA-modifying YgfZ family.

The protein localises to the cytoplasm. In terms of biological role, folate-binding protein involved in regulating the level of ATP-DnaA and in the modification of some tRNAs. It is probably a key factor in regulatory networks that act via tRNA modification, such as initiation of chromosomal replication. The sequence is that of tRNA-modifying protein YgfZ from Yersinia pseudotuberculosis serotype O:1b (strain IP 31758).